Here is a 259-residue protein sequence, read N- to C-terminus: F-box/kelch-repeat protein At2g22050 (259 aa).

Over residues 1–12 (MSPSSKKFKKQS) the composition is skewed to basic residues. The tract at residues 1 to 29 (MSPSSKKFKKQSSSKSVKPPLEDNDPSLP) is disordered. The region spanning 28–76 (LPSFTSLPDEIVLDCLQRVPRSYYLNLCRVSKTLRSLVRSPELSRLRTL) is the F-box domain. A Kelch repeat occupies 142-186 (EIYFVGGSFEPMSELWILDTRTGMFRQGPSMKVARTDEASVGVIN).

This chain is F-box/kelch-repeat protein At2g22050, found in Arabidopsis thaliana (Mouse-ear cress).